The primary structure comprises 234 residues: uncharacterized protein (234 aa).

2 helical membrane passes run 20-40 and 176-196; these read LILL…FKVI and VMAF…LHFL.

This sequence belongs to the CpsC/CapA family.

Its subcellular location is the cell membrane. This is an uncharacterized protein from Bacillus subtilis (strain 168).